Reading from the N-terminus, the 66-residue chain is Large ribosomal subunit protein bL33c (66 aa).

This sequence belongs to the bacterial ribosomal protein bL33 family.

It is found in the plastid. Its subcellular location is the chloroplast. In Cycas taitungensis (Prince sago), this protein is Large ribosomal subunit protein bL33c.